The primary structure comprises 284 residues: Tropomyosin Tod p 1.0102 (284 aa).

The stretch at Lys15–Glu273 forms a coiled coil. Positions Glu103–Gly136 are disordered.

This sequence belongs to the tropomyosin family. As to quaternary structure, homodimer. Post-translationally, the N-terminus is blocked. In terms of tissue distribution, expressed in mantle muscle (at protein level).

Functionally, tropomyosin, in association with the troponin complex, plays a central role in the calcium dependent regulation of muscle contraction. The polypeptide is Tropomyosin Tod p 1.0102 (Todarodes pacificus (Japanese flying squid)).